The sequence spans 169 residues: Peptide methionine sulfoxide reductase MsrA (169 aa).

Cys10 is a catalytic residue.

This sequence belongs to the MsrA Met sulfoxide reductase family.

The enzyme catalyses L-methionyl-[protein] + [thioredoxin]-disulfide + H2O = L-methionyl-(S)-S-oxide-[protein] + [thioredoxin]-dithiol. The catalysed reaction is [thioredoxin]-disulfide + L-methionine + H2O = L-methionine (S)-S-oxide + [thioredoxin]-dithiol. Has an important function as a repair enzyme for proteins that have been inactivated by oxidation. Catalyzes the reversible oxidation-reduction of methionine sulfoxide in proteins to methionine. The chain is Peptide methionine sulfoxide reductase MsrA from Streptococcus agalactiae serotype Ia (strain ATCC 27591 / A909 / CDC SS700).